The primary structure comprises 397 residues: L-cysteine desulfidase (397 aa).

Catalysis depends on C23, which acts as the Proton acceptor. [4Fe-4S] cluster-binding residues include C288, C330, and C337.

This sequence belongs to the L-cysteine desulfidase family. Homotrimer. [4Fe-4S] cluster serves as cofactor.

The catalysed reaction is L-cysteine + H2O = hydrogen sulfide + pyruvate + NH4(+) + H(+). In terms of biological role, catalyzes the cleavage of L-cysteine to form 2-aminoprop-2-enoate and sulfide. The former then spontaneously hydrolyzes to pyruvate and NH(3). May be responsible for the production of sulfide required for the biosynthesis of iron-sulfur centers in this archaea. This Methanococcus maripaludis (strain C7 / ATCC BAA-1331) protein is L-cysteine desulfidase.